The chain runs to 210 residues: Oxygen-insensitive NADPH nitroreductase (210 aa).

150-155 serves as a coordination point for NADP(+); sequence GVSLMG.

This sequence belongs to the nitroreductase family.

Its function is as follows. Reduction of a variety of nitroaromatic compounds using NADPH as source of reducing equivalents; two electrons are transferred. Capable of reducing metronidazole; inactive RdxA renders the bacterium resistant to this compound. The reduction of metronidazole generates hydroxylamine, a potent mutagen and bactericide. In Helicobacter pylori (strain ATCC 700392 / 26695) (Campylobacter pylori), this protein is Oxygen-insensitive NADPH nitroreductase (rdxA).